The primary structure comprises 974 residues: Mediator of RNA polymerase II transcription subunit 16 (974 aa).

The segment at 62–92 is disordered; that stretch reads ESSSTLSTHSTTTSVNGSTTAGVGSTPNFGG. A compositionally biased stretch (low complexity) spans 63–75; sequence SSSTLSTHSTTTS. The span at 76 to 92 shows a compositional bias: polar residues; the sequence is VNGSTTAGVGSTPNFGG. The Nuclear localization signal motif lies at 889-893; sequence KLPIK.

This sequence belongs to the Mediator complex subunit 16 family. As to quaternary structure, component of the Mediator complex, which is composed of at least 21 subunits that form three structurally distinct submodules. The Mediator head module contains MED6, MED8, MED11, SRB4/MED17, SRB5/MED18, ROX3/MED19, SRB2/MED20 and SRB6/MED22, the middle module contains MED1, MED4, NUT1/MED5, MED7, CSE2/MED9, NUT2/MED10, SRB7/MED21 and SOH1/MED31, and the tail module contains MED2, PGD1/MED3, RGR1/MED14, GAL11/MED15 and SIN4/MED16. The head and the middle modules interact directly with RNA polymerase II, whereas the elongated tail module interacts with gene-specific regulatory proteins. Interacts with HOG1. Phosphorylated by KIN28.

Its subcellular location is the nucleus. In terms of biological role, component of the Mediator complex, a coactivator involved in the regulated transcription of nearly all RNA polymerase II-dependent genes. Mediator functions as a bridge to convey information from gene-specific regulatory proteins to the basal RNA polymerase II transcription machinery. The Mediator complex, having a compact conformation in its free form, is recruited to promoters by direct interactions with regulatory proteins and serves for the assembly of a functional preinitiation complex with RNA polymerase II and the general transcription factors. The Mediator complex unfolds to an extended conformation and partially surrounds RNA polymerase II, specifically interacting with the unphosphorylated form of the C-terminal domain (CTD) of RNA polymerase II. The Mediator complex dissociates from the RNA polymerase II holoenzyme and stays at the promoter when transcriptional elongation begins. This is Mediator of RNA polymerase II transcription subunit 16 (SIN4) from Saccharomyces cerevisiae (strain ATCC 204508 / S288c) (Baker's yeast).